The chain runs to 360 residues: Histidinol-phosphate aminotransferase (360 aa).

N6-(pyridoxal phosphate)lysine is present on lysine 218.

It belongs to the class-II pyridoxal-phosphate-dependent aminotransferase family. Histidinol-phosphate aminotransferase subfamily. In terms of assembly, homodimer. Pyridoxal 5'-phosphate serves as cofactor.

The enzyme catalyses L-histidinol phosphate + 2-oxoglutarate = 3-(imidazol-4-yl)-2-oxopropyl phosphate + L-glutamate. It functions in the pathway amino-acid biosynthesis; L-histidine biosynthesis; L-histidine from 5-phospho-alpha-D-ribose 1-diphosphate: step 7/9. The sequence is that of Histidinol-phosphate aminotransferase from Chlorobium phaeobacteroides (strain DSM 266 / SMG 266 / 2430).